Consider the following 533-residue polypeptide: MVIITSWKRFKEYLYYDQELELLLDISRMNFSAEFLTELAEPMRDAYHQLQLLEKGALANPDEGRMVGHYWLRNPDLAPTEEIAQDIKETLKEILDFAEQIHSGRLQGEKGNPFRNILLVGVGGSILGPRFVADALASSRDKMKAFFIDNGDPDGIDRVLSRIGEELPATLCLIISKSGGTIETRNGMLEVRRAYEEAGLSFPDHAVAITQRGSQLDKLSQKEGWLRAFPMWDWVGGRTSLLSAVGLLSLALQGIDVAGLLQGAKDCDGRTRRPDTLANPGALLALMWYYSTQGQGGKQMVVLPYKDRLELFTKYLQQLIMESLGKEKNLQGETVHQGITVYGNKGSSDQHSYLQQLLEGPDNFFVTFIEVLKDRQGSSAYMEENSTSGEYLQAFLLGTREALTQKGRESLTITVKEVNAYTIGVLIALFERAVSIYALLVGINAYHQPAVEMGKKAAGQAIQLKNNIVECLKKHPDKRFSVHEIALAIGEEAHQEMVFKLLLHLTTNPEHGVNMAAGHPLPESRFFVSGPIL.

Glu322 (proton donor) is an active-site residue. Residues His351 and Lys455 contribute to the active site.

The protein belongs to the GPI family.

It localises to the cytoplasm. The enzyme catalyses alpha-D-glucose 6-phosphate = beta-D-fructose 6-phosphate. Its pathway is carbohydrate biosynthesis; gluconeogenesis. The protein operates within carbohydrate degradation; glycolysis; D-glyceraldehyde 3-phosphate and glycerone phosphate from D-glucose: step 2/4. Catalyzes the reversible isomerization of glucose-6-phosphate to fructose-6-phosphate. The polypeptide is Glucose-6-phosphate isomerase (Desulfitobacterium hafniense (strain DSM 10664 / DCB-2)).